Here is a 300-residue protein sequence, read N- to C-terminus: Protoheme IX farnesyltransferase 1 (300 aa).

8 helical membrane-spanning segments follow: residues 26-46, 48-68, 97-117, 120-140, 148-168, 174-194, 226-246, and 280-300; these read VVVL…RAGV, WTVL…AAAV, AALA…LTFT, LTAW…TGFL, IVIG…AATG, PLLL…ALAI, FALL…VLYL, and IYYL…LLNL.

This sequence belongs to the UbiA prenyltransferase family. Protoheme IX farnesyltransferase subfamily.

Its subcellular location is the cell inner membrane. The enzyme catalyses heme b + (2E,6E)-farnesyl diphosphate + H2O = Fe(II)-heme o + diphosphate. It participates in porphyrin-containing compound metabolism; heme O biosynthesis; heme O from protoheme: step 1/1. Converts heme B (protoheme IX) to heme O by substitution of the vinyl group on carbon 2 of heme B porphyrin ring with a hydroxyethyl farnesyl side group. The sequence is that of Protoheme IX farnesyltransferase 1 from Pseudomonas fluorescens (strain ATCC BAA-477 / NRRL B-23932 / Pf-5).